The following is a 597-amino-acid chain: Aspartate--tRNA(Asp/Asn) ligase (597 aa).

Glutamate 175 lines the L-aspartate pocket. The aspartate stretch occupies residues 199-202 (QQYK). L-aspartate-binding residues include arginine 221 and histidine 454. ATP is bound at residue 221-223 (RDE). Glutamate 488 provides a ligand contact to ATP. Arginine 495 is a binding site for L-aspartate. Residue 540 to 543 (GIDR) coordinates ATP.

The protein belongs to the class-II aminoacyl-tRNA synthetase family. Type 1 subfamily. Homodimer.

Its subcellular location is the cytoplasm. It catalyses the reaction tRNA(Asx) + L-aspartate + ATP = L-aspartyl-tRNA(Asx) + AMP + diphosphate. Functionally, aspartyl-tRNA synthetase with relaxed tRNA specificity since it is able to aspartylate not only its cognate tRNA(Asp) but also tRNA(Asn). Reaction proceeds in two steps: L-aspartate is first activated by ATP to form Asp-AMP and then transferred to the acceptor end of tRNA(Asp/Asn). This Bartonella tribocorum (strain CIP 105476 / IBS 506) protein is Aspartate--tRNA(Asp/Asn) ligase.